Reading from the N-terminus, the 370-residue chain is 3-isopropylmalate dehydrogenase (370 aa).

77–90 (GPKWDSVPYEVRPE) provides a ligand contact to NAD(+). Substrate is bound by residues R97, R107, R135, and D226. Mg(2+) is bound by residues D226, D250, and D254. 290–302 (GSAPDIAGKGIAN) lines the NAD(+) pocket.

Belongs to the isocitrate and isopropylmalate dehydrogenases family. LeuB type 1 subfamily. In terms of assembly, homodimer. It depends on Mg(2+) as a cofactor. The cofactor is Mn(2+).

Its subcellular location is the cytoplasm. It carries out the reaction (2R,3S)-3-isopropylmalate + NAD(+) = 4-methyl-2-oxopentanoate + CO2 + NADH. It participates in amino-acid biosynthesis; L-leucine biosynthesis; L-leucine from 3-methyl-2-oxobutanoate: step 3/4. Its function is as follows. Catalyzes the oxidation of 3-carboxy-2-hydroxy-4-methylpentanoate (3-isopropylmalate) to 3-carboxy-4-methyl-2-oxopentanoate. The product decarboxylates to 4-methyl-2 oxopentanoate. This is 3-isopropylmalate dehydrogenase from Rhizobium etli (strain ATCC 51251 / DSM 11541 / JCM 21823 / NBRC 15573 / CFN 42).